A 916-amino-acid polypeptide reads, in one-letter code: Protein translocase subunit SecA (916 aa).

Residues Gln87, 105-109, and Asp512 each bind ATP; that span reads GEGKT. Positions 857–916 are disordered; the sequence is QHAEAPSMEQAVAGEEEELPEGPAPVVPLEPVRNEQKIGRNEPCPCGSGKKYKHCHGQLD. Residues Cys900, Cys902, Cys911, and His912 each contribute to the Zn(2+) site. Positions 906 to 916 are enriched in basic residues; that stretch reads KKYKHCHGQLD.

The protein belongs to the SecA family. In terms of assembly, monomer and homodimer. Part of the essential Sec protein translocation apparatus which comprises SecA, SecYEG and auxiliary proteins SecDF-YajC and YidC. It depends on Zn(2+) as a cofactor.

It localises to the cell inner membrane. Its subcellular location is the cytoplasm. The catalysed reaction is ATP + H2O + cellular proteinSide 1 = ADP + phosphate + cellular proteinSide 2.. In terms of biological role, part of the Sec protein translocase complex. Interacts with the SecYEG preprotein conducting channel. Has a central role in coupling the hydrolysis of ATP to the transfer of proteins into and across the cell membrane, serving both as a receptor for the preprotein-SecB complex and as an ATP-driven molecular motor driving the stepwise translocation of polypeptide chains across the membrane. This Pseudomonas aeruginosa (strain UCBPP-PA14) protein is Protein translocase subunit SecA.